The primary structure comprises 133 residues: Fatty acid-binding protein homolog 1 (133 aa).

Methionine 1 bears the N-acetylmethionine mark. Hexadecanoate is bound by residues arginine 107 and 127 to 129 (RTY).

The protein belongs to the calycin superfamily. Fatty-acid binding protein (FABP) family.

In terms of biological role, has been implicated in the acquisition, storage, and transport of lipids, and may be important to the organism since it is incapable of synthesizing most of its lipids de novo. This Echinococcus granulosus (Hydatid tapeworm) protein is Fatty acid-binding protein homolog 1 (FABP1).